The following is a 104-amino-acid chain: Large ribosomal subunit protein uL24 (104 aa).

This sequence belongs to the universal ribosomal protein uL24 family. As to quaternary structure, part of the 50S ribosomal subunit.

Functionally, one of two assembly initiator proteins, it binds directly to the 5'-end of the 23S rRNA, where it nucleates assembly of the 50S subunit. Its function is as follows. One of the proteins that surrounds the polypeptide exit tunnel on the outside of the subunit. This chain is Large ribosomal subunit protein uL24, found in Bradyrhizobium diazoefficiens (strain JCM 10833 / BCRC 13528 / IAM 13628 / NBRC 14792 / USDA 110).